Reading from the N-terminus, the 189-residue chain is Large ribosomal subunit protein uL6 (189 aa).

Belongs to the universal ribosomal protein uL6 family. Part of the 50S ribosomal subunit.

Functionally, this protein binds to the 23S rRNA, and is important in its secondary structure. It is located near the subunit interface in the base of the L7/L12 stalk, and near the tRNA binding site of the peptidyltransferase center. In Phocaeicola vulgatus (strain ATCC 8482 / DSM 1447 / JCM 5826 / CCUG 4940 / NBRC 14291 / NCTC 11154) (Bacteroides vulgatus), this protein is Large ribosomal subunit protein uL6.